The sequence spans 314 residues: uncharacterized protein (314 aa).

The interval 1 to 71 (MAGNSQRRGA…QRAGRKADET (71 aa)) is disordered. Gly-266, Ile-286, and Leu-295 together coordinate S-adenosyl-L-methionine.

This sequence belongs to the class IV-like SAM-binding methyltransferase superfamily. RNA methyltransferase TrmH family.

This is an uncharacterized protein from Mycolicibacterium smegmatis (strain ATCC 700084 / mc(2)155) (Mycobacterium smegmatis).